We begin with the raw amino-acid sequence, 634 residues long: Endoribonuclease rege-1 (634 aa).

Disordered stretches follow at residues 1–33, 90–113, and 156–223; these read MDSTARGHAPLCRTSNQRGLGTRLNPYYQSTPH, SHPSLSRESSDPSKIDDDQTAPMI, and KMGL…NPDP. Over residues 97–106 the composition is skewed to basic and acidic residues; sequence ESSDPSKIDD. Low complexity-rich tracts occupy residues 182 to 194 and 201 to 217; these read SSASSSSASSSSS and SVSIATSSPATSSSTPS. The 153-residue stretch at 225–377 folds into the RNase NYN domain; sequence LRAVVVDGSN…PSGRHGPRIE (153 aa). Asp314 lines the Mg(2+) pocket. The C3H1-type zinc-finger motif lies at 387–412; that stretch reads SSNPLVCPYARKCTYGNKCKFYHPER.

The protein belongs to the ZC3H12 family. Mg(2+) is required as a cofactor. As to expression, expressed in the intestinal cells adjacent to the pharynx.

The protein resides in the cytoplasm. Its function is as follows. Endonuclease which binds to the 3'UTR of target mRNAs and induces degradation of the transcript. Acts together with rle-1 to repress the expression of the transcription factor ets-4 by binding to the conserved ADE (alternate decay element) and RCE (REGE-1 cleavage element) stem loop structure in its 3'UTR, which controls the expression of genes in the IIS and TORC1 pathways, including those involved in lipid metabolism and autophagosome formation. May play a role in the clearance of apoptotic cell corpses. This Caenorhabditis elegans protein is Endoribonuclease rege-1.